The sequence spans 259 residues: Eukaryotic translation initiation factor 3 subunit G-2 (259 aa).

In terms of domain architecture, RRM spans 179–257 (SAVRISNLSE…LILSVEWSKP (79 aa)).

This sequence belongs to the eIF-3 subunit G family. In terms of assembly, component of the eukaryotic translation initiation factor 3 (eIF-3) complex. The eIF-3 complex interacts with pix.

The protein localises to the cytoplasm. Functionally, RNA-binding component of the eukaryotic translation initiation factor 3 (eIF-3) complex, which is involved in protein synthesis of a specialized repertoire of mRNAs and, together with other initiation factors, stimulates binding of mRNA and methionyl-tRNAi to the 40S ribosome. The eIF-3 complex specifically targets and initiates translation of a subset of mRNAs involved in cell proliferation. This subunit can bind 18S rRNA. This is Eukaryotic translation initiation factor 3 subunit G-2 from Drosophila mojavensis (Fruit fly).